A 457-amino-acid polypeptide reads, in one-letter code: tRNA-2-methylthio-N(6)-dimethylallyladenosine synthase (457 aa).

One can recognise an MTTase N-terminal domain in the interval 3 to 120; that stretch reads KKVYVKTFGC…LPQMIDKRRE (118 aa). 6 residues coordinate [4Fe-4S] cluster: cysteine 12, cysteine 49, cysteine 83, cysteine 157, cysteine 161, and cysteine 164. One can recognise a Radical SAM core domain in the interval 143–377; it reads RVDGPSAFVS…QATIEENVQR (235 aa). The TRAM domain occupies 380 to 447; that stretch reads DSMVGKIERI…PHSLRGELVL (68 aa).

The protein belongs to the methylthiotransferase family. MiaB subfamily. As to quaternary structure, monomer. The cofactor is [4Fe-4S] cluster.

Its subcellular location is the cytoplasm. The enzyme catalyses N(6)-dimethylallyladenosine(37) in tRNA + (sulfur carrier)-SH + AH2 + 2 S-adenosyl-L-methionine = 2-methylsulfanyl-N(6)-dimethylallyladenosine(37) in tRNA + (sulfur carrier)-H + 5'-deoxyadenosine + L-methionine + A + S-adenosyl-L-homocysteine + 2 H(+). In terms of biological role, catalyzes the methylthiolation of N6-(dimethylallyl)adenosine (i(6)A), leading to the formation of 2-methylthio-N6-(dimethylallyl)adenosine (ms(2)i(6)A) at position 37 in tRNAs that read codons beginning with uridine. This is tRNA-2-methylthio-N(6)-dimethylallyladenosine synthase from Paraburkholderia xenovorans (strain LB400).